Reading from the N-terminus, the 324-residue chain is Annexin A3 (324 aa).

Annexin repeat units follow at residues 19–90, 91–162, 174–246, and 250–321; these read FNPS…ALIT, APAV…TLAD, HLAK…AVVR, and NTPA…KICG. The residue at position 178 (lysine 178) is an N6-acetyllysine. Threonine 268 bears the Phosphothreonine mark.

The protein belongs to the annexin family.

In terms of biological role, inhibitor of phospholipase A2, also possesses anti-coagulant properties. The sequence is that of Annexin A3 (Anxa3) from Rattus norvegicus (Rat).